A 685-amino-acid polypeptide reads, in one-letter code: Nucleolar protein 4 (685 aa).

The disordered stretch occupies residues 1–21 (MEETIENVEVPSSNVSKQNDD). An RRM 1 domain is found at 26–103 (KTLFVRSIPQ…HILRVDIAKR (78 aa)). Positions 106 to 123 (RSKKTSEVVEKSTPESSE) are enriched in basic and acidic residues. The disordered stretch occupies residues 106–142 (RSKKTSEVVEKSTPESSEKITGQNNEDEDDADGEDSM). The span at 130 to 140 (NEDEDDADGED) shows a compositional bias: acidic residues. Residues 147-225 (PKLIIRNMPW…RKVAVDFAVQ (79 aa)) enclose the RRM 2 domain. Basic and acidic residues predominate over residues 231-242 (DYKKAQPEMNDK). The tract at residues 231 to 285 (DYKKAQPEMNDKDDNESGNEDAEENHDDEEDENEEEDRQVDQASKNKESKRKAQN) is disordered. Over residues 243–268 (DDNESGNEDAEENHDDEEDENEEEDR) the composition is skewed to acidic residues. Residue Ser-247 is modified to Phosphoserine. 2 RRM domains span residues 290 to 383 (FSVF…PTLV) and 462 to 612 (TRLA…FAIE). Position 379 is a phosphothreonine (Thr-379). Residues 622–631 (EQLKQARTKR) show a composition bias toward basic residues. A disordered region spans residues 622-685 (EQLKQARTKR…FKRKRKHAKK (64 aa)). Residues 645-672 (SENKKPKKEEATTPTNPDDKKMGDDIKR) are compositionally biased toward basic and acidic residues. Basic residues predominate over residues 674 to 685 (IGFKRKRKHAKK).

As to quaternary structure, interacts with NOP1.

The protein localises to the nucleus. Its subcellular location is the nucleolus. In terms of biological role, required for 60S ribosomal subunit synthesis. Probably involved in the processing of 27S rRNA to produce mature 25S rRNA. This Saccharomyces cerevisiae (strain ATCC 204508 / S288c) (Baker's yeast) protein is Nucleolar protein 4 (NOP4).